The sequence spans 200 residues: N-(5'-phosphoribosyl)anthranilate isomerase (200 aa).

Belongs to the TrpF family.

The catalysed reaction is N-(5-phospho-beta-D-ribosyl)anthranilate = 1-(2-carboxyphenylamino)-1-deoxy-D-ribulose 5-phosphate. The protein operates within amino-acid biosynthesis; L-tryptophan biosynthesis; L-tryptophan from chorismate: step 3/5. This chain is N-(5'-phosphoribosyl)anthranilate isomerase, found in Endomicrobium trichonymphae.